The chain runs to 542 residues: Retron Ec83 probable ATPase (542 aa).

The ATP-binding motif lies at 92 to 99 (GNNGCGKS).

In terms of biological role, probable ATPase component of antiviral defense system retron Ec83, composed of a non-coding RNA (ncRNA), a reverse transcriptase (RT), this protein and a putative HNH endonuclease. Expression of retron Ec83 confers protection against bacteriophage T2, T4 and T6. At multiplicity of infection (MOI) of 0.02 cultures slow growth when infected with T4 but do not collapse, at MOI 2 cultures enter growth stasis. This is Retron Ec83 probable ATPase from Escherichia coli.